Here is a 292-residue protein sequence, read N- to C-terminus: D-galactarolactone isomerase (292 aa).

It belongs to the metallo-dependent hydrolases superfamily. It depends on Does not require a metal cofactor. as a cofactor.

It catalyses the reaction D-galactaro-1,5-lactone = D-galactaro-1,4-lactone. Its pathway is carbohydrate acid metabolism; D-galacturonate degradation via prokaryotic oxidative pathway. Its function is as follows. Catalyzes the isomerization of D-galactaro-1,5-lactone to D-galactaro-1,4-lactone. This is a step in the oxidative degradation pathway of D-galacturonate, which allows A.tumefaciens to utilize D-galacturonate as a sole carbon source. The polypeptide is D-galactarolactone isomerase (Agrobacterium fabrum (strain C58 / ATCC 33970) (Agrobacterium tumefaciens (strain C58))).